The sequence spans 201 residues: Probable GTP-binding protein EngB (201 aa).

The EngB-type G domain maps to serine 22 to tyrosine 195. Residues glycine 30–serine 37, glycine 57–threonine 61, aspartate 75–glycine 78, threonine 142–aspartate 145, and tyrosine 174–serine 176 each bind GTP. Serine 37 and threonine 59 together coordinate Mg(2+).

It belongs to the TRAFAC class TrmE-Era-EngA-EngB-Septin-like GTPase superfamily. EngB GTPase family. It depends on Mg(2+) as a cofactor.

Functionally, necessary for normal cell division and for the maintenance of normal septation. In Finegoldia magna (strain ATCC 29328 / DSM 20472 / WAL 2508) (Peptostreptococcus magnus), this protein is Probable GTP-binding protein EngB.